The primary structure comprises 567 residues: Protein ESMERALDA 1 (567 aa).

Residues 1-41 (MLAKNRLPGSGHTTPSPPASPRRSPRYRHGRSKAAAGSRFP) are disordered. At 1 to 65 (MLAKNRLPGS…ILLSVLLRRQ (65 aa)) the chain is on the cytoplasmic side. Positions 23-32 (RSPRYRHGRS) are enriched in basic residues. A helical; Signal-anchor for type II membrane protein transmembrane segment spans residues 66–86 (GIFLFAPLIYISCMLLYMGTV). At 87-567 (SFDVVPIIQR…TPESRPPPAT (481 aa)) the chain is on the lumenal side. Residues N121, N145, N184, and N238 are each glycosylated (N-linked (GlcNAc...) asparagine). 331-333 (HLR) is a substrate binding site. 5 N-linked (GlcNAc...) asparagine glycosylation sites follow: N403, N419, N449, N538, and N554.

This sequence belongs to the glycosyltransferase GT106 family. Ubiquitous.

It is found in the golgi apparatus membrane. The protein operates within protein modification; protein glycosylation. Its function is as follows. Glycosyltransferase that plays a role in cell adhesion. The polypeptide is Protein ESMERALDA 1 (Arabidopsis thaliana (Mouse-ear cress)).